The primary structure comprises 198 residues: MIEFVYPHTQLVAGVDEVGRGPLVGAVVTAAVILDPARPIAGLNDSKKLSEKRRLVLCEEIKEKALSWSLGRAEPHEIDELNILHATMLAMQRAVAGLHIAPEYVLIDGNRCPKLPMPSMAVVKGDSRVPEISAASILAKVTRDAEMAALDIVFPQYGFAQHKGYPTAFHLEKLAEHGATEHHRRSFGPVKRALGLAS.

Residues 10–198 (QLVAGVDEVG…PVKRALGLAS (189 aa)) enclose the RNase H type-2 domain. 3 residues coordinate a divalent metal cation: aspartate 16, glutamate 17, and aspartate 108.

Belongs to the RNase HII family. It depends on Mn(2+) as a cofactor. Requires Mg(2+) as cofactor.

Its subcellular location is the cytoplasm. The enzyme catalyses Endonucleolytic cleavage to 5'-phosphomonoester.. In terms of biological role, endonuclease that specifically degrades the RNA of RNA-DNA hybrids. The sequence is that of Ribonuclease HII from Escherichia coli O45:K1 (strain S88 / ExPEC).